The following is a 786-amino-acid chain: von Willebrand factor A domain-containing protein 5A (786 aa).

Positions 1–131 (MVHFCGLLTL…KAAVTLKYVQ (131 aa)) constitute a VIT domain. Positions 281 to 462 (EFIFLMDRSG…KALRTLKRSL (182 aa)) constitute a VWFA domain.

As to expression, expressed at low level in many tissues. Not expressed in 80% of tumor cell lines tested.

In terms of biological role, may play a role in tumorigenesis as a tumor suppressor. Altered expression of this protein and disruption of the molecular pathway it is involved in, may contribute directly to or modify tumorigenesis. This chain is von Willebrand factor A domain-containing protein 5A (VWA5A), found in Homo sapiens (Human).